We begin with the raw amino-acid sequence, 186 residues long: Orotate phosphoribosyltransferase (186 aa).

Residues Arg93, Lys94, Lys97, His99, and 119-127 (EDVTTTGGS) each bind 5-phospho-alpha-D-ribose 1-diphosphate. 2 residues coordinate orotate: Thr123 and Arg151.

The protein belongs to the purine/pyrimidine phosphoribosyltransferase family. PyrE subfamily. In terms of assembly, homodimer. Mg(2+) serves as cofactor.

The enzyme catalyses orotidine 5'-phosphate + diphosphate = orotate + 5-phospho-alpha-D-ribose 1-diphosphate. Its pathway is pyrimidine metabolism; UMP biosynthesis via de novo pathway; UMP from orotate: step 1/2. Catalyzes the transfer of a ribosyl phosphate group from 5-phosphoribose 1-diphosphate to orotate, leading to the formation of orotidine monophosphate (OMP). This chain is Orotate phosphoribosyltransferase, found in Pyrococcus horikoshii (strain ATCC 700860 / DSM 12428 / JCM 9974 / NBRC 100139 / OT-3).